A 189-amino-acid polypeptide reads, in one-letter code: Ribosome maturation factor RimP (189 aa).

This sequence belongs to the RimP family.

The protein resides in the cytoplasm. In terms of biological role, required for maturation of 30S ribosomal subunits. The polypeptide is Ribosome maturation factor RimP (Mycobacteroides abscessus (strain ATCC 19977 / DSM 44196 / CCUG 20993 / CIP 104536 / JCM 13569 / NCTC 13031 / TMC 1543 / L948) (Mycobacterium abscessus)).